We begin with the raw amino-acid sequence, 176 residues long: ATP-dependent protease subunit HslV (176 aa).

Residue T5 is part of the active site. Na(+) contacts are provided by A161, C164, and T167.

The protein belongs to the peptidase T1B family. HslV subfamily. In terms of assembly, a double ring-shaped homohexamer of HslV is capped on each side by a ring-shaped HslU homohexamer. The assembly of the HslU/HslV complex is dependent on binding of ATP.

It is found in the cytoplasm. It carries out the reaction ATP-dependent cleavage of peptide bonds with broad specificity.. Allosterically activated by HslU binding. Its function is as follows. Protease subunit of a proteasome-like degradation complex believed to be a general protein degrading machinery. The sequence is that of ATP-dependent protease subunit HslV from Caldicellulosiruptor saccharolyticus (strain ATCC 43494 / DSM 8903 / Tp8T 6331).